Here is a 67-residue protein sequence, read N- to C-terminus: DNA gyrase inhibitor YacG (67 aa).

The Zn(2+) site is built by cysteine 10, cysteine 13, cysteine 29, and cysteine 33. Residues 44-57 (EEKRIPSSGDRSDT) are compositionally biased toward basic and acidic residues. A disordered region spans residues 44 to 67 (EEKRIPSSGDRSDTDGWSEEENQP).

This sequence belongs to the DNA gyrase inhibitor YacG family. Interacts with GyrB. Zn(2+) is required as a cofactor.

Inhibits all the catalytic activities of DNA gyrase by preventing its interaction with DNA. Acts by binding directly to the C-terminal domain of GyrB, which probably disrupts DNA binding by the gyrase. This Cronobacter sakazakii (strain ATCC BAA-894) (Enterobacter sakazakii) protein is DNA gyrase inhibitor YacG.